The primary structure comprises 3526 residues: WD repeat and FYVE domain-containing protein 3 (3526 aa).

Residues Ser-1942 and Ser-2278 each carry the phosphoserine modification. Residues 2285–2981 (LTGSRRNRKE…PHPPKRVRSR (697 aa)) form a sufficient for localization to p62 bodies/ALIS region. Disordered stretches follow at residues 2403 to 2429 (ETNVASEIPSKQPETPDDIPQKKPARY) and 2459 to 2522 (SSEG…EKTD). Residues 2468–2477 (EPEHGEDTIA) are compositionally biased toward basic and acidic residues. Ser-2492 carries the phosphoserine modification. A BEACH-type PH domain is found at 2531–2656 (EEGEKIQHMY…IRNKVYQRFL (126 aa)). Residues 2586–3526 (MHEPIIPRGA…RGSEDGPRNC (941 aa)) form an interaction with SQSTM1 region. In terms of domain architecture, BEACH spans 2683-2976 (GLLSTLVGEK…QLFKKPHPPK (294 aa)). Residues 2981–3526 (RLNGDNAGIS…RGSEDGPRNC (546 aa)) form an interaction with ATG5 region. WD repeat units follow at residues 3077 to 3115 (SEWGQILCAICPNPKLVITGGTSTVVCVWEMGTSKEKAK), 3125 to 3164 (GHTDTVTCATASLAYHIIVSGSRDRTCIIWDLNKLSFLTQ), 3167 to 3206 (GHRAPVSALCINELTGDIVSCAGTYIHVWSINGNPIVSVN), and 3210 to 3254 (GRSQ…VPET). Residues 3272–3335 (AQIGQEAQDE…SGSDDSRRWS (64 aa)) are disordered. Acidic residues predominate over residues 3278–3290 (AQDEDSSDSEADE). The segment at 3313–3363 (AASCRATAAWCTDSGSDDSRRWSDQLSLDEKDGFIFVNYSEGQTRAHLQGP) is interaction with GABARAP. Phosphoserine occurs at positions 3335 and 3339. The LC3-interacting region (LIR) motif lies at 3346–3349 (FIFV). One copy of the WD 5 repeat lies at 3408–3447 (AHPAEVTALGISKDHSRILVGDSRGRVFSWSVSDQPGRSA). The FYVE-type zinc-finger motif lies at 3454–3514 (DEGGDSCSGC…VCQNCYYNLQ (61 aa)). 8 residues coordinate Zn(2+): Cys-3460, Cys-3463, Cys-3476, Cys-3479, Cys-3484, Cys-3487, Cys-3506, and Cys-3509.

Directly interacts with ATG5 and associates with the ATG12-ATG5-ATG16L complex. Interacts with p62/SQSTM1; this interaction is required to recruit WDFY3 to cytoplasmic bodies and to PML bodies. Directly interacts with GABARAP, GABARAPL1 and GABARAPL2; the interaction with GABARAP is required for WDFY3 recruitment to MAP1LC3B-positive p62/SQSTM1 bodies. Weakly interacts with MAP1LC3C; this interaction is direct. Does not interact with MAP1LC3A, nor MAP1LC3B. Interacts with TRAF6. Expressed in osteoclast and their mononuclear precursors (at protein level).

The protein localises to the nucleus membrane. Its subcellular location is the cytoplasm. It localises to the cytosol. The protein resides in the nucleus. It is found in the PML body. The protein localises to the membrane. Its subcellular location is the perikaryon. It localises to the cell projection. The protein resides in the axon. Its function is as follows. Required for selective macroautophagy (aggrephagy). Acts as an adapter protein by linking specific proteins destined for degradation to the core autophagic machinery members, such as the ATG5-ATG12-ATG16L E3-like ligase, SQSTM1 and LC3. Along with p62/SQSTM1, involved in the formation and autophagic degradation of cytoplasmic ubiquitin-containing inclusions (p62 bodies, ALIS/aggresome-like induced structures). Along with SQSTM1, required to recruit ubiquitinated proteins to PML bodies in the nucleus. Important for normal brain development. Essential for the formation of axonal tracts throughout the brain and spinal cord, including the formation of the major forebrain commissures. Involved in the ability of neural cells to respond to guidance cues. Required for cortical neurons to respond to the trophic effects of netrin-1/NTN1. Regulates Wnt signaling through the removal of DVL3 aggregates, likely in an autophagy-dependent manner. This process may be important for the determination of brain size during embryonic development. May regulate osteoclastogenesis by acting on the TNFSF11/RANKL - TRAF6 pathway. After cytokinetic abscission, involved in midbody remnant degradation. In vitro strongly binds to phosphatidylinositol 3-phosphate (PtdIns3P). The chain is WD repeat and FYVE domain-containing protein 3 (WDFY3) from Homo sapiens (Human).